Here is a 108-residue protein sequence, read N- to C-terminus: Glutaredoxin 4 (108 aa).

A Glutaredoxin domain is found at 4–106 (FQKIKKQIQD…KLILKVKKKY (103 aa)). Lysine 21 contacts glutathione. Cysteine 29 serves as a coordination point for [2Fe-2S] cluster. Glutathione is bound by residues arginine 58, phenylalanine 70, and 83–84 (CS).

It belongs to the glutaredoxin family. Monothiol subfamily. Homodimer.

The protein resides in the cytoplasm. In terms of biological role, monothiol glutaredoxin involved in the biogenesis of iron-sulfur clusters. In Buchnera aphidicola subsp. Acyrthosiphon pisum (strain APS) (Acyrthosiphon pisum symbiotic bacterium), this protein is Glutaredoxin 4 (grxD).